A 161-amino-acid chain; its full sequence is Nucleotide-binding protein BMASAVP1_A0673 (161 aa).

This sequence belongs to the YajQ family.

In terms of biological role, nucleotide-binding protein. The protein is Nucleotide-binding protein BMASAVP1_A0673 of Burkholderia mallei (strain SAVP1).